The primary structure comprises 496 residues: Cobyric acid synthase (496 aa).

The region spanning 257 to 447 (KINVAIILLK…MHGILDNPAV (191 aa)) is the GATase cobBQ-type domain. Cys338 functions as the Nucleophile in the catalytic mechanism. His439 is a catalytic residue.

Belongs to the CobB/CobQ family. CobQ subfamily.

Its pathway is cofactor biosynthesis; adenosylcobalamin biosynthesis. In terms of biological role, catalyzes amidations at positions B, D, E, and G on adenosylcobyrinic A,C-diamide. NH(2) groups are provided by glutamine, and one molecule of ATP is hydrogenolyzed for each amidation. This is Cobyric acid synthase from Parabacteroides distasonis (strain ATCC 8503 / DSM 20701 / CIP 104284 / JCM 5825 / NCTC 11152).